The chain runs to 301 residues: Acetylglutamate kinase (301 aa).

Residues 72 to 73, arginine 94, and asparagine 199 contribute to the substrate site; that span reads GG.

Belongs to the acetylglutamate kinase family. ArgB subfamily.

Its subcellular location is the cytoplasm. It catalyses the reaction N-acetyl-L-glutamate + ATP = N-acetyl-L-glutamyl 5-phosphate + ADP. Its pathway is amino-acid biosynthesis; L-arginine biosynthesis; N(2)-acetyl-L-ornithine from L-glutamate: step 2/4. In terms of biological role, catalyzes the ATP-dependent phosphorylation of N-acetyl-L-glutamate. The sequence is that of Acetylglutamate kinase from Azorhizobium caulinodans (strain ATCC 43989 / DSM 5975 / JCM 20966 / LMG 6465 / NBRC 14845 / NCIMB 13405 / ORS 571).